Here is a 556-residue protein sequence, read N- to C-terminus: Urease subunit alpha 1 (556 aa).

A Urease domain is found at 127–556; sequence GAVDTHVHLL…SVSLNRLYFL (430 aa). The Ni(2+) site is built by His-132, His-134, and Lys-212. Position 212 is an N6-carboxylysine (Lys-212). A substrate-binding site is contributed by His-214. Ni(2+) is bound by residues His-241 and His-267. His-315 acts as the Proton donor in catalysis. Asp-355 serves as a coordination point for Ni(2+).

This sequence belongs to the metallo-dependent hydrolases superfamily. Urease alpha subunit family. May form a heterohexamer of 3 UreC (alpha) and 3 UreAB (gamma/beta) subunits. May also form a heterotrimer of UreA (gamma), UreB (beta) and UreC (alpha) subunits. Three heterotrimers associate to form the active enzyme. It depends on Ni cation as a cofactor. Post-translationally, carboxylation allows a single lysine to coordinate two nickel ions.

It localises to the cytoplasm. It carries out the reaction urea + 2 H2O + H(+) = hydrogencarbonate + 2 NH4(+). It participates in nitrogen metabolism; urea degradation; CO(2) and NH(3) from urea (urease route): step 1/1. This chain is Urease subunit alpha 1, found in Streptomyces avermitilis (strain ATCC 31267 / DSM 46492 / JCM 5070 / NBRC 14893 / NCIMB 12804 / NRRL 8165 / MA-4680).